Reading from the N-terminus, the 244-residue chain is tRNA (guanine-N(7)-)-methyltransferase (244 aa).

Positions 75, 100, 127, and 150 each coordinate S-adenosyl-L-methionine. Asp-150 is an active-site residue. Substrate contacts are provided by residues Lys-154, Asp-186, and 223–226; that span reads TRFE.

This sequence belongs to the class I-like SAM-binding methyltransferase superfamily. TrmB family.

It carries out the reaction guanosine(46) in tRNA + S-adenosyl-L-methionine = N(7)-methylguanosine(46) in tRNA + S-adenosyl-L-homocysteine. It participates in tRNA modification; N(7)-methylguanine-tRNA biosynthesis. Functionally, catalyzes the formation of N(7)-methylguanine at position 46 (m7G46) in tRNA. The chain is tRNA (guanine-N(7)-)-methyltransferase from Xylella fastidiosa (strain M12).